Consider the following 221-residue polypeptide: MVSFTTLLTAVATAVSAVTASPLEALKRGIQPGTGVHDGYFYSFWTDGRGYVDFNNGPRGSYRVSWSNVNNWVGGKGWNPGPPRRIAYNGTWNNWNVNSYLALYGWTTNPLVEYYIVEAYGSYNPSSGAARLGTIEDDGGVYDIYRTRRINQPSIIGTASFDQYWSVRRQKRVGGTIDTGKHFDEWRRQGNLQLGAWNYMIMATEGYQSSGSAEIEVRSLD.

Positions 1–17 (MVSFTTLLTAVATAVSA) are cleaved as a signal peptide. Residues 28-218 (RGIQPGTGVH…SSGSAEIEVR (191 aa)) form the GH11 domain. N-linked (GlcNAc...) asparagine glycosylation occurs at Asn89. Glu113 (nucleophile) is an active-site residue. Glu205 (proton donor) is an active-site residue.

It belongs to the glycosyl hydrolase 11 (cellulase G) family.

It is found in the secreted. It catalyses the reaction Endohydrolysis of (1-&gt;4)-beta-D-xylosidic linkages in xylans.. Its pathway is glycan degradation; xylan degradation. Retains an activity of 52.5% in the presence of 5 mM SDS. In terms of biological role, endo-1,4-beta-xylanase involved in the hydrolysis of xylan, a major structural heterogeneous polysaccharide found in plant biomass representing the second most abundant polysaccharide in the biosphere, after cellulose. Is an alkali-tolerant enzyme, exhibiting 50.6% of activity at pH 9.0, and 26.9% even at pH 10.0. This Humicola insolens (Soft-rot fungus) protein is Endo-1,4-beta-xylanase 11A.